The sequence spans 350 residues: UDP-glucose 4-epimerase (350 aa).

Residues 13 to 15, 34 to 38, 67 to 68, Phe-89, and Lys-93 contribute to the NAD(+) site; these read GYI, DNLCN, and DI. Residue 133–135 coordinates substrate; sequence SAT. Tyr-158 functions as the Proton acceptor in the catalytic mechanism. Residues Lys-162 and Tyr-186 each coordinate NAD(+). Substrate-binding positions include 186 to 188, 207 to 209, 225 to 227, Arg-240, and 303 to 306; these read YFN, NNL, SVY, and RSGD.

The protein belongs to the NAD(P)-dependent epimerase/dehydratase family. Homodimer. NAD(+) is required as a cofactor.

The catalysed reaction is UDP-alpha-D-glucose = UDP-alpha-D-galactose. It catalyses the reaction UDP-N-acetyl-alpha-D-glucosamine = UDP-N-acetyl-alpha-D-galactosamine. It functions in the pathway carbohydrate metabolism; galactose metabolism. Catalyzes two distinct but analogous reactions: the reversible epimerization of UDP-glucose to UDP-galactose and the reversible epimerization of UDP-N-acetylglucosamine to UDP-N-acetylgalactosamine. The reaction with UDP-Gal plays a critical role in the Leloir pathway of galactose catabolism in which galactose is converted to the glycolytic intermediate glucose 6-phosphate. It contributes to the catabolism of dietary galactose and enables the endogenous biosynthesis of both UDP-Gal and UDP-GalNAc when exogenous sources are limited. Both UDP-sugar interconversions are important in the synthesis of glycoproteins and glycolipids. The polypeptide is UDP-glucose 4-epimerase (Gale) (Drosophila melanogaster (Fruit fly)).